The chain runs to 866 residues: Leucine--tRNA ligase (866 aa).

The 'HIGH' region motif lies at 42–52; sequence PYPSGKLHMGH. Positions 630–634 match the 'KMSKS' region motif; the sequence is KMSKS. An ATP-binding site is contributed by Lys-633.

The protein belongs to the class-I aminoacyl-tRNA synthetase family.

Its subcellular location is the cytoplasm. The catalysed reaction is tRNA(Leu) + L-leucine + ATP = L-leucyl-tRNA(Leu) + AMP + diphosphate. The chain is Leucine--tRNA ligase from Laribacter hongkongensis (strain HLHK9).